The primary structure comprises 68 residues: Ferredoxin Fdx (68 aa).

[3Fe-4S] cluster contacts are provided by Cys-12, Gln-13, Ala-16, Cys-18, and Cys-56.

The cofactor is [3Fe-4S] cluster.

In terms of biological role, ferredoxin that is the redox partner of cytochrome CYP51, a sterol 14alpha-demethylase encoded by an adjacent gene. This Mycobacterium tuberculosis (strain ATCC 25618 / H37Rv) protein is Ferredoxin Fdx.